The following is a 391-amino-acid chain: Casein kinase II subunit alpha (391 aa).

The interaction with beta subunit stretch occupies residues 36-41 (QDDYQL). The 286-residue stretch at 39 to 324 (YQLVRKLGRG…AREAMEHPYF (286 aa)) folds into the Protein kinase domain. ATP contacts are provided by residues 45-53 (LGRGKYSEV) and lysine 68. Aspartate 156 acts as the Proton acceptor in catalysis. Threonine 344 and threonine 360 each carry phosphothreonine; by CDK1. A phosphoserine; by CDK1 mark is found at serine 362 and serine 370.

The protein belongs to the protein kinase superfamily. Ser/Thr protein kinase family. CK2 subfamily. Heterotetramer composed of two catalytic subunits (alpha chain and/or alpha' chain) and two regulatory subunits (beta chains). The tetramer can exist as a combination of 2 alpha/2 beta, 2 alpha'/2 beta or 1 alpha/1 alpha'/2 beta subunits. Also part of a CK2-SPT16-SSRP1 complex composed of SSRP1, SUPT16H, CSNK2A1, CSNK2A2 and CSNK2B, which forms following UV irradiation. Interacts with RNPS1. Interacts with SNAI1. Interacts with PML. Interacts with CCAR2. Interacts with HIRIP3. Phosphorylated at Thr-344, Thr-360, Ser-362 and Ser-370 by CDK1 in prophase and metaphase and dephosphorylated during anaphase. Phosphorylation does not directly affect casein kinase 2 activity, but may contribute to its regulation by forming binding sites for interacting proteins and/or targeting it to different compartments.

It is found in the nucleus. It carries out the reaction L-seryl-[protein] + ATP = O-phospho-L-seryl-[protein] + ADP + H(+). The catalysed reaction is L-threonyl-[protein] + ATP = O-phospho-L-threonyl-[protein] + ADP + H(+). Constitutively active protein kinase whose activity is not directly affected by phosphorylation. Seems to be regulated by level of expression and localization. Catalytic subunit of a constitutively active serine/threonine-protein kinase complex that phosphorylates a large number of substrates containing acidic residues C-terminal to the phosphorylated serine or threonine. Regulates numerous cellular processes, such as cell cycle progression, apoptosis and transcription, as well as viral infection. May act as a regulatory node which integrates and coordinates numerous signals leading to an appropriate cellular response. During mitosis, functions as a component of the p53/TP53-dependent spindle assembly checkpoint (SAC) that maintains cyclin-B-CDK1 activity and G2 arrest in response to spindle damage. Also required for p53/TP53-mediated apoptosis, phosphorylating 'Ser-392' of p53/TP53 following UV irradiation. Phosphorylates a number of DNA repair proteins in response to DNA damage, such as MDC1, MRE11, RAD9A, RAD51 and HTATSF1, promoting their recruitment to DNA damage sites. Can also negatively regulate apoptosis. Phosphorylates the caspases CASP9 and CASP2 and the apoptotic regulator NOL3. Phosphorylation protects CASP9 from cleavage and activation by CASP8, and inhibits the dimerization of CASP2 and activation of CASP8. Phosphorylates YY1, protecting YY1 from cleavage by CASP7 during apoptosis. Regulates transcription by direct phosphorylation of RNA polymerases I, II, III and IV. Also phosphorylates and regulates numerous transcription factors including NF-kappa-B, STAT1, CREB1, IRF1, IRF2, ATF1, ATF4, SRF, MAX, JUN, FOS, MYC and MYB. Phosphorylates Hsp90 and its co-chaperones FKBP4 and CDC37, which is essential for chaperone function. Mediates sequential phosphorylation of FNIP1, promoting its gradual interaction with Hsp90, leading to activate both kinase and non-kinase client proteins of Hsp90. Regulates Wnt signaling by phosphorylating CTNNB1 and the transcription factor LEF1. Acts as an ectokinase that phosphorylates several extracellular proteins. Phosphorylates PML at 'Ser-565' and primes it for ubiquitin-mediated degradation. Plays an important role in the circadian clock function by phosphorylating BMAL1 at 'Ser-90' which is pivotal for its interaction with CLOCK and which controls CLOCK nuclear entry. Phosphorylates FMR1, promoting FMR1-dependent formation of a membraneless compartment. May phosphorylate histone H2A on 'Ser-1'. In Oryctolagus cuniculus (Rabbit), this protein is Casein kinase II subunit alpha (CSNK2A1).